A 469-amino-acid chain; its full sequence is tRNA(Ile)-lysidine synthase (469 aa).

ATP is bound at residue 26–31 (SGGPDS).

Belongs to the tRNA(Ile)-lysidine synthase family.

It localises to the cytoplasm. The catalysed reaction is cytidine(34) in tRNA(Ile2) + L-lysine + ATP = lysidine(34) in tRNA(Ile2) + AMP + diphosphate + H(+). Functionally, ligates lysine onto the cytidine present at position 34 of the AUA codon-specific tRNA(Ile) that contains the anticodon CAU, in an ATP-dependent manner. Cytidine is converted to lysidine, thus changing the amino acid specificity of the tRNA from methionine to isoleucine. The polypeptide is tRNA(Ile)-lysidine synthase (Shouchella clausii (strain KSM-K16) (Alkalihalobacillus clausii)).